A 448-amino-acid chain; its full sequence is U1 small nuclear ribonucleoprotein 70 kDa (448 aa).

The segment at 91–201 is required for interaction with U1 RNA; sequence TEIKNATEDP…GGGLGGTRRG (111 aa). An RRM domain is found at 102 to 180; sequence RTLFIARINY…KRVLVDVERA (79 aa). The segment at 188–448 is disordered; the sequence is PRRLGGGLGG…SSGDPSWWRQ (261 aa). The segment covering 191 to 200 has biased composition (gly residues); that stretch reads LGGGLGGTRR. 2 stretches are compositionally biased toward basic and acidic residues: residues 206-234 and 262-272; these read NIKHSGREDNERERERYRLEREREDREGP and ERRDRERDRGR. Basic residues predominate over residues 281–293; sequence SRSRSRERRKRRA. Composition is skewed to basic and acidic residues over residues 294 to 320 and 346 to 376; these read GSRERYDEFDRRDRRDRERERDRDRER and RDRERGTGSGGDVKERKPDFRDMDVIKIKEE. A mediates binding to Psi region spans residues 405 to 425; it reads RPPPAHHNMFSVPPPPILGRG. Over residues 426–448 the composition is skewed to polar residues; the sequence is NASTNPNPDNGQQSSGDPSWWRQ.

In terms of assembly, component of the U1 snRNP. Interacts with Psi; essential for alternative splicing of P-element transposase. Interacts with the SMN complex.

The protein localises to the nucleus speckle. It localises to the nucleus. The protein resides in the nucleoplasm. Mediates the splicing of pre-mRNA by binding to the stem loop I region of U1-snRNA. Required during oogenesis for nurse cell chromatin dispersal. The protein is U1 small nuclear ribonucleoprotein 70 kDa (snRNP-U1-70K) of Drosophila melanogaster (Fruit fly).